A 152-amino-acid chain; its full sequence is Ribosome maturation factor RimP (152 aa).

This sequence belongs to the RimP family.

It is found in the cytoplasm. Required for maturation of 30S ribosomal subunits. The protein is Ribosome maturation factor RimP of Citrobacter koseri (strain ATCC BAA-895 / CDC 4225-83 / SGSC4696).